A 529-amino-acid polypeptide reads, in one-letter code: Polygalacturonase (529 aa).

An N-terminal signal peptide occupies residues 1–21 (MNHRYTLLALAAAALSAGAHA). Residue D305 is the Proton donor of the active site. H331 is an active-site residue. The segment at 516 to 529 (AFVPLKSVAPTSPI) is required for PGA export across the outer membrane and catalytic activity.

The protein belongs to the glycosyl hydrolase 28 family. As to quaternary structure, monomer.

Its subcellular location is the secreted. The catalysed reaction is (1,4-alpha-D-galacturonosyl)n+m + H2O = (1,4-alpha-D-galacturonosyl)n + (1,4-alpha-D-galacturonosyl)m.. Contributes to the wilt disease production on tomato. The polypeptide is Polygalacturonase (pglA) (Ralstonia solanacearum (Pseudomonas solanacearum)).